The primary structure comprises 167 residues: Ribosome-binding factor A (167 aa).

The segment at 127-167 is disordered; it reads SRANAQYAGDADPYKHDEPDDDDFDDDDDVEVEDWDDDDEA. The segment covering 145–167 has biased composition (acidic residues); the sequence is PDDDDFDDDDDVEVEDWDDDDEA.

Belongs to the RbfA family. As to quaternary structure, monomer. Binds 30S ribosomal subunits, but not 50S ribosomal subunits or 70S ribosomes.

The protein localises to the cytoplasm. One of several proteins that assist in the late maturation steps of the functional core of the 30S ribosomal subunit. Associates with free 30S ribosomal subunits (but not with 30S subunits that are part of 70S ribosomes or polysomes). Required for efficient processing of 16S rRNA. May interact with the 5'-terminal helix region of 16S rRNA. The sequence is that of Ribosome-binding factor A from Bifidobacterium adolescentis (strain ATCC 15703 / DSM 20083 / NCTC 11814 / E194a).